The primary structure comprises 94 residues: Exodeoxyribonuclease 7 small subunit (94 aa).

The segment at 1–21 (MPRAPNDAPSASATPSATPAS) is disordered.

Belongs to the XseB family. Heterooligomer composed of large and small subunits.

The protein localises to the cytoplasm. The catalysed reaction is Exonucleolytic cleavage in either 5'- to 3'- or 3'- to 5'-direction to yield nucleoside 5'-phosphates.. Bidirectionally degrades single-stranded DNA into large acid-insoluble oligonucleotides, which are then degraded further into small acid-soluble oligonucleotides. This Ralstonia pickettii (strain 12J) protein is Exodeoxyribonuclease 7 small subunit.